The following is a 119-amino-acid chain: Large ribosomal subunit protein uL18 (119 aa).

A disordered region spans residues 54-76 (LTSASTLADDVEGETPTEESRSV).

It belongs to the universal ribosomal protein uL18 family. Part of the 50S ribosomal subunit; part of the 5S rRNA/L5/L18/L25 subcomplex. Contacts the 5S and 23S rRNAs.

Functionally, this is one of the proteins that bind and probably mediate the attachment of the 5S RNA into the large ribosomal subunit, where it forms part of the central protuberance. The protein is Large ribosomal subunit protein uL18 of Salinibacter ruber (strain DSM 13855 / M31).